A 535-amino-acid chain; its full sequence is CTP synthase (535 aa).

The tract at residues Met1–Leu267 is amidoligase domain. Position 13 (Ser13) interacts with CTP. Position 13 (Ser13) interacts with UTP. Ser14–Ile19 serves as a coordination point for ATP. Position 54 (Tyr54) interacts with L-glutamine. Asp71 lines the ATP pocket. Residues Asp71 and Glu141 each coordinate Mg(2+). CTP contacts are provided by residues Asp148–Glu150, Lys188–Gln193, and Lys224. UTP is bound by residues Lys188–Gln193 and Lys224. Arg240–Ala242 lines the ATP pocket. The 243-residue stretch at Lys292 to Ser534 folds into the Glutamine amidotransferase type-1 domain. An L-glutamine-binding site is contributed by Gly354. Catalysis depends on Cys381, which acts as the Nucleophile; for glutamine hydrolysis. L-glutamine-binding positions include Leu382 to Gln385, Glu405, and Arg462. Active-site residues include His507 and Glu509.

The protein belongs to the CTP synthase family. As to quaternary structure, homotetramer.

The catalysed reaction is UTP + L-glutamine + ATP + H2O = CTP + L-glutamate + ADP + phosphate + 2 H(+). The enzyme catalyses L-glutamine + H2O = L-glutamate + NH4(+). It carries out the reaction UTP + NH4(+) + ATP = CTP + ADP + phosphate + 2 H(+). It functions in the pathway pyrimidine metabolism; CTP biosynthesis via de novo pathway; CTP from UDP: step 2/2. Its activity is regulated as follows. Allosterically activated by GTP, when glutamine is the substrate; GTP has no effect on the reaction when ammonia is the substrate. The allosteric effector GTP functions by stabilizing the protein conformation that binds the tetrahedral intermediate(s) formed during glutamine hydrolysis. Inhibited by the product CTP, via allosteric rather than competitive inhibition. Functionally, catalyzes the ATP-dependent amination of UTP to CTP with either L-glutamine or ammonia as the source of nitrogen. Regulates intracellular CTP levels through interactions with the four ribonucleotide triphosphates. This chain is CTP synthase, found in Bacillus anthracis (strain A0248).